An 89-amino-acid polypeptide reads, in one-letter code: Probable monothiol glutaredoxin GrlA (89 aa).

Residues 1–89 enclose the Glutaredoxin domain; the sequence is MLYMKGTPKM…EPMLRDAVAA (89 aa). A glutathione-binding site is contributed by Lys-5. Cys-13 serves as a coordination point for [2Fe-2S] cluster. Glutathione contacts are provided by residues Arg-42, Phe-54, and 67–68; that span reads SD.

The protein belongs to the glutaredoxin family. Monothiol subfamily.

The chain is Probable monothiol glutaredoxin GrlA (grlA) from Legionella pneumophila subsp. pneumophila (strain Philadelphia 1 / ATCC 33152 / DSM 7513).